The chain runs to 73 residues: MAKKEDTIVLEGRVKELLPGMHFKILLENGMPVTAHLCGKMRMSNIRLLVGDRVTVEMSAYDLTKARVVYRHR.

The S1-like domain occupies 1–73 (MAKKEDTIVL…TKARVVYRHR (73 aa)).

The protein belongs to the IF-1 family. As to quaternary structure, component of the 30S ribosomal translation pre-initiation complex which assembles on the 30S ribosome in the order IF-2 and IF-3, IF-1 and N-formylmethionyl-tRNA(fMet); mRNA recruitment can occur at any time during PIC assembly.

Its subcellular location is the cytoplasm. Its function is as follows. One of the essential components for the initiation of protein synthesis. Stabilizes the binding of IF-2 and IF-3 on the 30S subunit to which N-formylmethionyl-tRNA(fMet) subsequently binds. Helps modulate mRNA selection, yielding the 30S pre-initiation complex (PIC). Upon addition of the 50S ribosomal subunit IF-1, IF-2 and IF-3 are released leaving the mature 70S translation initiation complex. This chain is Translation initiation factor IF-1, found in Chlamydia abortus (strain DSM 27085 / S26/3) (Chlamydophila abortus).